Reading from the N-terminus, the 125-residue chain is Calcitonin receptor-stimulating peptide 1 (125 aa).

The N-terminal stretch at Met-1–Ala-25 is a signal peptide. Residues Ala-26–Gln-77 constitute a propeptide that is removed on maturation. A disulfide bridge links Cys-81 with Cys-86.

This sequence belongs to the calcitonin family.

The protein localises to the secreted. Stimulates cAMP production via the calcitonin receptor (CT) but not via the CT-like (CL) receptor. This chain is Calcitonin receptor-stimulating peptide 1 (CRSP1), found in Ovis aries (Sheep).